A 230-amino-acid polypeptide reads, in one-letter code: Orotidine 5'-phosphate decarboxylase (230 aa).

Substrate contacts are provided by residues D10, K32, 59 to 68 (DLKYHDIPNT), T119, R180, Q189, G209, and R210. Catalysis depends on K61, which acts as the Proton donor.

This sequence belongs to the OMP decarboxylase family. Type 1 subfamily. In terms of assembly, homodimer.

The enzyme catalyses orotidine 5'-phosphate + H(+) = UMP + CO2. It functions in the pathway pyrimidine metabolism; UMP biosynthesis via de novo pathway; UMP from orotate: step 2/2. Functionally, catalyzes the decarboxylation of orotidine 5'-monophosphate (OMP) to uridine 5'-monophosphate (UMP). This Actinobacillus pleuropneumoniae serotype 5b (strain L20) protein is Orotidine 5'-phosphate decarboxylase.